Here is a 51-residue protein sequence, read N- to C-terminus: MYEEEKYEYICMRCGKKVRLDINEDPIRCTHCGFRLVMKPRHPVPRRYKAR.

3 residues coordinate Zn(2+): cysteine 14, cysteine 29, and cysteine 32.

This sequence belongs to the archaeal Rpo12/eukaryotic RPC10 RNA polymerase subunit family. As to quaternary structure, part of the RNA polymerase complex. Zn(2+) is required as a cofactor.

The protein resides in the cytoplasm. It catalyses the reaction RNA(n) + a ribonucleoside 5'-triphosphate = RNA(n+1) + diphosphate. In terms of biological role, DNA-dependent RNA polymerase (RNAP) catalyzes the transcription of DNA into RNA using the four ribonucleoside triphosphates as substrates. The polypeptide is DNA-directed RNA polymerase subunit Rpo12 (Methanopyrus kandleri (strain AV19 / DSM 6324 / JCM 9639 / NBRC 100938)).